The following is a 288-amino-acid chain: MLKKISFKKLELKPELENKNESTIIPCAPKELLLICPKCKKTLLKSELADNLDVCRECGYHFRISARKRIGITVDNETFVEYDRELRSKNILNFPGYDEKLKTAIKENGENEAVICGIGKIEGFECAIFAMEPFFMMGSMGCVVGEKIARLFELATDKSIPVIGFTVSGGARMQEGIMSLMQMAKISGAVKRHSNNGNLYVAVLTDPTTGGVTASFAMQGDIIVSEPDTLIGFAGPRVIEQTIRRSLPDGFQRAEFLMERGFLDSIVGRNELKKYLGNILMLHNVEAR.

Residues 32-288 form the CoA carboxyltransferase N-terminal domain; it reads LLLICPKCKK…ILMLHNVEAR (257 aa). The Zn(2+) site is built by Cys-36, Cys-39, Cys-55, and Cys-58. A C4-type zinc finger spans residues 36–58; that stretch reads CPKCKKTLLKSELADNLDVCREC.

This sequence belongs to the AccD/PCCB family. Acetyl-CoA carboxylase is a heterohexamer composed of biotin carboxyl carrier protein (AccB), biotin carboxylase (AccC) and two subunits each of ACCase subunit alpha (AccA) and ACCase subunit beta (AccD). Zn(2+) is required as a cofactor.

It is found in the cytoplasm. It carries out the reaction N(6)-carboxybiotinyl-L-lysyl-[protein] + acetyl-CoA = N(6)-biotinyl-L-lysyl-[protein] + malonyl-CoA. Its pathway is lipid metabolism; malonyl-CoA biosynthesis; malonyl-CoA from acetyl-CoA: step 1/1. Component of the acetyl coenzyme A carboxylase (ACC) complex. Biotin carboxylase (BC) catalyzes the carboxylation of biotin on its carrier protein (BCCP) and then the CO(2) group is transferred by the transcarboxylase to acetyl-CoA to form malonyl-CoA. This Ruminiclostridium cellulolyticum (strain ATCC 35319 / DSM 5812 / JCM 6584 / H10) (Clostridium cellulolyticum) protein is Acetyl-coenzyme A carboxylase carboxyl transferase subunit beta.